The sequence spans 455 residues: Tumor necrosis factor receptor superfamily member 1A (455 aa).

A signal peptide spans 1–29 (MGLSTVPDLLLPLVLLELLVGIYPSGVIG). At 30 to 211 (LVPHLGDREK…VKGTEDSGTT (182 aa)) the chain is on the extracellular side. TNFR-Cys repeat units lie at residues 43 to 82 (VCPQGKYIHPQNNSICCTKCHKGTYLYNDCPGPGQDTDCR), 83 to 125 (ECES…DTVC), 126 to 166 (GCRK…NTVC), and 167 to 196 (TCHAGFFLRENECVSCSNCKKSLECTKLCL). 7 cysteine pairs are disulfide-bonded: Cys44–Cys58, Cys59–Cys72, Cys62–Cys81, Cys84–Cys99, Cys102–Cys117, Cys105–Cys125, and Cys127–Cys143. The N-linked (GlcNAc...) asparagine glycan is linked to Asn54. Residues Asn145 and Asn151 are each glycosylated (N-linked (GlcNAc...) asparagine). Disulfide bonds link Cys146/Cys158, Cys149/Cys166, Cys168/Cys179, Cys182/Cys195, and Cys185/Cys191. A helical transmembrane segment spans residues 212-232 (VLLPLVIFFGLCLLSLLFIGL). Over 233–455 (MYRYQRWKSK…ALPPAPSLLR (223 aa)) the chain is Cytoplasmic. A disordered region spans residues 254–273 (EKEGELEGTTTKPLAPNPSF). The N-SMase activation domain (NSD) stretch occupies residues 338 to 348 (LQKWEDSAHKP). The region spanning 356-441 (PATLYAVVEN…GCLEDIEEAL (86 aa)) is the Death domain. Arg376 is a glycosylation site ((Microbial infection) N-beta-linked (GlcNAc) arginine).

In terms of assembly, binding of TNF to the extracellular domain leads to homotrimerization. The aggregated death domains provide a novel molecular interface that interacts specifically with the death domain of TRADD. Various TRADD-interacting proteins such as TRAFS, RIPK1 and possibly FADD, are recruited to the complex by their association with TRADD. This complex activates at least two distinct signaling cascades, apoptosis and NF-kappa-B signaling. Interacts with BAG4, BABAM2, FEM1B, GRB2, SQSTM1 and TRPC4AP. Interacts directly with NOL3 (via CARD domain); inhibits TNF-signaling pathway. Interacts with SH3RF2, TRADD and RIPK1. SH3RF2 facilitates the recruitment of RIPK1 and TRADD to TNFRSF1A in a TNF-alpha-dependent process. Interacts with PGLYRP1; this interaction is important for cell death induction. Interacts (via death domain) with MADD (via death domain). (Microbial infection) Interacts with mumps virus protein SH; this interaction inhibits downstream NF-kappa-B pathway activation. As to quaternary structure, (Microbial infection) Interacts with HCV core protein. In terms of assembly, (Microbial infection) Interacts with human cytomegalovirus/HHV-5 protein UL138. (Microbial infection) Interacts with host TNFRSF1A; this interaction leads to the stimulation of both surface expression and shedding of TNFRSF1A. Post-translationally, the soluble form is produced from the membrane form by proteolytic processing. (Microbial infection) Glycosylated at Arg-376 by enteropathogenic E.coli protein NleB1 and S.typhimurium protein Ssek3: arginine GlcNAcylation prevents homotypic/heterotypic death domain interactions.

The protein resides in the cell membrane. Its subcellular location is the golgi apparatus membrane. It is found in the secreted. Receptor for TNFSF2/TNF-alpha and homotrimeric TNFSF1/lymphotoxin-alpha. The adapter molecule FADD recruits caspase-8 to the activated receptor. The resulting death-inducing signaling complex (DISC) performs caspase-8 proteolytic activation which initiates the subsequent cascade of caspases (aspartate-specific cysteine proteases) mediating apoptosis. Contributes to the induction of non-cytocidal TNF effects including anti-viral state and activation of the acid sphingomyelinase. The chain is Tumor necrosis factor receptor superfamily member 1A (TNFRSF1A) from Homo sapiens (Human).